A 200-amino-acid chain; its full sequence is WASH complex subunit 3 (200 aa).

Residues 56-76 (SLRIQQIETTLSILEAKLASI) are a coiled coil. Disordered stretches follow at residues 87–130 (VRAP…AENI) and 165–200 (DPNL…SFSD).

This sequence belongs to the CCDC53 family. As to quaternary structure, component of the WASH complex.

The chain is WASH complex subunit 3 from Danio rerio (Zebrafish).